The sequence spans 125 residues: Large ribosomal subunit protein bL19 (125 aa).

This sequence belongs to the bacterial ribosomal protein bL19 family.

In terms of biological role, this protein is located at the 30S-50S ribosomal subunit interface and may play a role in the structure and function of the aminoacyl-tRNA binding site. This Ehrlichia ruminantium (strain Gardel) protein is Large ribosomal subunit protein bL19.